The chain runs to 262 residues: MSNEYNWLRQLNLFFVATGFFTRLPTPSWVIADDNELKKSSRYFGLVGLLIGLICALVYWFTQQWLPTSVAVLLAMVAGVLVTGGFHEDGLADTADGFLGGKTFEDKLRIMKDNHLGSYGAIVLALILLLRWQLLVELALFSPWAAITGFIVAHTLSRVLAASLIFSVKYVTDLELEEGKRLSHDQSLNDLFILLASGIFVLFWLNGLAAFVLFISLWALRFCLCKYFRSQIGGYTGDTLDAAQQVSEIMCYLIILAVGLSA.

Transmembrane regions (helical) follow at residues 11 to 31, 43 to 63, 66 to 86, 121 to 141, 146 to 166, and 199 to 219; these read LNLF…SWVI, YFGL…WFTQ, LPTS…TGGF, AIVL…LALF, AITG…SLIF, and IFVL…SLWA.

Belongs to the CobS family. It depends on Mg(2+) as a cofactor.

Its subcellular location is the cell inner membrane. The enzyme catalyses alpha-ribazole + adenosylcob(III)inamide-GDP = adenosylcob(III)alamin + GMP + H(+). The catalysed reaction is alpha-ribazole 5'-phosphate + adenosylcob(III)inamide-GDP = adenosylcob(III)alamin 5'-phosphate + GMP + H(+). The protein operates within cofactor biosynthesis; adenosylcobalamin biosynthesis; adenosylcobalamin from cob(II)yrinate a,c-diamide: step 7/7. Functionally, joins adenosylcobinamide-GDP and alpha-ribazole to generate adenosylcobalamin (Ado-cobalamin). Also synthesizes adenosylcobalamin 5'-phosphate from adenosylcobinamide-GDP and alpha-ribazole 5'-phosphate. The polypeptide is Adenosylcobinamide-GDP ribazoletransferase (Shewanella denitrificans (strain OS217 / ATCC BAA-1090 / DSM 15013)).